Reading from the N-terminus, the 202-residue chain is Ribosome maturation factor RimM (202 aa).

The PRC barrel domain maps to 100–195 (ADEWYPKDLI…YLTLDPPGGL (96 aa)).

This sequence belongs to the RimM family. Binds ribosomal protein uS19.

It is found in the cytoplasm. Its function is as follows. An accessory protein needed during the final step in the assembly of 30S ribosomal subunit, possibly for assembly of the head region. Essential for efficient processing of 16S rRNA. May be needed both before and after RbfA during the maturation of 16S rRNA. It has affinity for free ribosomal 30S subunits but not for 70S ribosomes. This chain is Ribosome maturation factor RimM, found in Bifidobacterium longum (strain NCC 2705).